Here is a 759-residue protein sequence, read N- to C-terminus: RNA-binding protein 28 (759 aa).

N-acetylalanine is present on A2. The RRM 1 domain occupies 4-80; that stretch reads LTLFVGRLPP…CKINVTVAKK (77 aa). The interval 84 to 105 is disordered; that stretch reads NKTKEKGKNENSECPKKEPKAK. Basic and acidic residues predominate over residues 85 to 101; the sequence is KTKEKGKNENSECPKKE. The RRM 2 domain maps to 114–191; that stretch reads ARLIIRNLSF…RTVAVDWAVA (78 aa). S122 carries the post-translational modification Phosphoserine. The segment at 201 to 330 is disordered; that stretch reads VSAIGEEKSH…NKKKRKLPSD (130 aa). Residues 205–224 show a composition bias toward basic and acidic residues; sequence GEEKSHESKHQESVKKKGRE. 2 stretches are compositionally biased toward acidic residues: residues 225-256 and 284-313; these read EEDMEEEENDDDDDDDDEEDGVFDDEDEEEEN and SEEDSDLEESDSIDDGEELAQSDTSTEEQE. RRM domains follow at residues 335-419 and 487-597; these read KTVF…LAVT and TRLC…RSLQ. S397 carries the post-translational modification Phosphoserine. The interval 594–759 is disordered; that stretch reads RSLQKMRSKP…LAKRSKWFDS (166 aa). The span at 615–640 shows a compositional bias: basic and acidic residues; sequence PAKDQQQKAAQHHTEEQSKVPPEQKR. K653 participates in a covalent cross-link: Glycyl lysine isopeptide (Lys-Gly) (interchain with G-Cter in SUMO2). The segment covering 689-698 has biased composition (basic residues); the sequence is VKPVHPKKPK. Over residues 700-715 the composition is skewed to polar residues; it reads QINQWKQEKQQLSSEQ.

In terms of assembly, interacts with U1, U2, U4, U5, and U6 spliceosomal small nuclear RNAs (snRNAs). In terms of tissue distribution, ubiquitously expressed.

Its subcellular location is the nucleus. It localises to the nucleolus. In terms of biological role, nucleolar component of the spliceosomal ribonucleoprotein complexes. The chain is RNA-binding protein 28 (RBM28) from Homo sapiens (Human).